We begin with the raw amino-acid sequence, 425 residues long: WD repeat-containing protein JIP5 (425 aa).

WD repeat units lie at residues Gln9–Ser48, Arg71–Lys110, Leu117–Ala158, Glu219–Glu262, and Leu321–Glu358. The disordered stretch occupies residues Gln354–Ala425. Acidic residues-rich tracts occupy residues Val356 to Ala368 and Ser378 to Glu396. Residues Gln399 to Lys414 are compositionally biased toward basic residues.

The protein belongs to the WD repeat WDR55 family.

The protein resides in the nucleus. The protein localises to the nucleolus. This chain is WD repeat-containing protein JIP5 (JIP5), found in Phaeosphaeria nodorum (strain SN15 / ATCC MYA-4574 / FGSC 10173) (Glume blotch fungus).